We begin with the raw amino-acid sequence, 267 residues long: Ribosomal RNA small subunit methyltransferase A (267 aa).

S-adenosyl-L-methionine is bound by residues Asn-18, Leu-20, Gly-45, Glu-66, Asp-91, and Asn-112.

It belongs to the class I-like SAM-binding methyltransferase superfamily. rRNA adenine N(6)-methyltransferase family. RsmA subfamily.

The protein localises to the cytoplasm. The catalysed reaction is adenosine(1518)/adenosine(1519) in 16S rRNA + 4 S-adenosyl-L-methionine = N(6)-dimethyladenosine(1518)/N(6)-dimethyladenosine(1519) in 16S rRNA + 4 S-adenosyl-L-homocysteine + 4 H(+). In terms of biological role, specifically dimethylates two adjacent adenosines (A1518 and A1519) in the loop of a conserved hairpin near the 3'-end of 16S rRNA in the 30S particle. May play a critical role in biogenesis of 30S subunits. This chain is Ribosomal RNA small subunit methyltransferase A, found in Shewanella denitrificans (strain OS217 / ATCC BAA-1090 / DSM 15013).